Reading from the N-terminus, the 69-residue chain is DNA-directed RNA polymerase subunit omega (69 aa).

Belongs to the RNA polymerase subunit omega family. The RNAP catalytic core consists of 2 alpha, 1 beta, 1 beta' and 1 omega subunit. When a sigma factor is associated with the core the holoenzyme is formed, which can initiate transcription.

It catalyses the reaction RNA(n) + a ribonucleoside 5'-triphosphate = RNA(n+1) + diphosphate. In terms of biological role, promotes RNA polymerase assembly. Latches the N- and C-terminal regions of the beta' subunit thereby facilitating its interaction with the beta and alpha subunits. This chain is DNA-directed RNA polymerase subunit omega, found in Geobacter metallireducens (strain ATCC 53774 / DSM 7210 / GS-15).